A 102-amino-acid chain; its full sequence is Small ribosomal subunit protein uS10 (102 aa).

Belongs to the universal ribosomal protein uS10 family. As to quaternary structure, part of the 30S ribosomal subunit.

Functionally, involved in the binding of tRNA to the ribosomes. The sequence is that of Small ribosomal subunit protein uS10 from Myxococcus xanthus (strain DK1622).